The following is a 142-amino-acid chain: MTRILATGTFDILHPGHLYYLEQARKYGNELYVLVARDSTIEHKPKPIVPEKQRLEMVKALRVVDHALLGSEEDMFKPLKEVQPDIIVLGHDQVFDEKELEDKLQKRGFNTKVVRLGKPHQCTLCSSGRIIKRILERKRTEL.

ATP contacts are provided by residues 9–10 (TF), 14–17 (HPGH), and aspartate 92.

The protein belongs to the archaeal FAD synthase family. In terms of assembly, homodimer. Requires a divalent metal cation as cofactor.

The catalysed reaction is FMN + ATP + H(+) = FAD + diphosphate. The protein operates within cofactor biosynthesis; FAD biosynthesis; FAD from FMN: step 1/1. Catalyzes the transfer of the AMP portion of ATP to flavin mononucleotide (FMN) to produce flavin adenine dinucleotide (FAD) coenzyme. This is FAD synthase from Methanohalophilus mahii (strain ATCC 35705 / DSM 5219 / SLP).